The sequence spans 142 residues: Midkine-A (142 aa).

A signal peptide spans 1 to 20 (MELRAFCVILLITVLAVSSQ). Disulfide bonds link C36–C60, C44–C69, C51–C73, C83–C115, and C93–C125.

This sequence belongs to the pleiotrophin family. Expression at the mid-gastrula stage begins in the neural anlage, and becomes increasingly prominent in the central nervous system and head mesenchyme during neurula stages. Although the mRNA is localized to the developing central nervous system (CNS), the protein is deposited at the neuromuscular junction (NMJ). In the tailbud stage embryo, expressed in the head and tail regions as well as in the CNS. In adults, expression is highest in the brain, eye and bone, with lower expression in the heart and lung. Not expressed in the ovary.

The protein localises to the secreted. Secreted protein that functions as a cytokine and growth factor and mediates its signal through cell-surface proteoglycan and non-proteoglycan receptors. Binds cell-surface proteoglycan receptors via their chondroitin sulfate (CS) groups. Thereby regulates many processes like inflammatory response, cell proliferation, cell adhesion, cell growth, cell survival, tissue regeneration, cell differentiation and cell migration. Inhibits mesoderm formation and promotes neural formation during development. Plays a role in development of the neuromuscular junction (NMJ). Has antibacterial activity against both Gram-positive and Gram-negative bacteria. This chain is Midkine-A (mdk-a), found in Xenopus laevis (African clawed frog).